We begin with the raw amino-acid sequence, 243 residues long: Triosephosphate isomerase (243 aa).

Residue 9-11 participates in substrate binding; it reads NWK. The active-site Electrophile is the histidine 96. Glutamate 165 functions as the Proton acceptor in the catalytic mechanism. Substrate contacts are provided by residues glycine 171, serine 204, and 225–226; that span reads GG.

The protein belongs to the triosephosphate isomerase family. Homodimer.

It localises to the cytoplasm. The catalysed reaction is D-glyceraldehyde 3-phosphate = dihydroxyacetone phosphate. The protein operates within carbohydrate biosynthesis; gluconeogenesis. It functions in the pathway carbohydrate degradation; glycolysis; D-glyceraldehyde 3-phosphate from glycerone phosphate: step 1/1. Involved in the gluconeogenesis. Catalyzes stereospecifically the conversion of dihydroxyacetone phosphate (DHAP) to D-glyceraldehyde-3-phosphate (G3P). This chain is Triosephosphate isomerase, found in Parasynechococcus marenigrum (strain WH8102).